The chain runs to 262 residues: Phosphatidylglycerol--prolipoprotein diacylglyceryl transferase (262 aa).

The next 4 membrane-spanning stretches (helical) occupy residues 9 to 29, 41 to 61, 80 to 100, and 109 to 129; these read LGPL…ILAV, IIPD…ILGA, IFAI…GALV, and LINT…AQSL. R131 provides a ligand contact to a 1,2-diacyl-sn-glycero-3-phospho-(1'-sn-glycerol). 3 helical membrane-spanning segments follow: residues 167–187, 197–217, and 226–246; these read QPTF…ILIF, GHIT…IEGM, and GLRV…MIVI.

This sequence belongs to the Lgt family.

Its subcellular location is the cell membrane. The enzyme catalyses L-cysteinyl-[prolipoprotein] + a 1,2-diacyl-sn-glycero-3-phospho-(1'-sn-glycerol) = an S-1,2-diacyl-sn-glyceryl-L-cysteinyl-[prolipoprotein] + sn-glycerol 1-phosphate + H(+). The protein operates within protein modification; lipoprotein biosynthesis (diacylglyceryl transfer). In terms of biological role, catalyzes the transfer of the diacylglyceryl group from phosphatidylglycerol to the sulfhydryl group of the N-terminal cysteine of a prolipoprotein, the first step in the formation of mature lipoproteins. In Streptococcus pneumoniae (strain ATCC 700669 / Spain 23F-1), this protein is Phosphatidylglycerol--prolipoprotein diacylglyceryl transferase.